The sequence spans 283 residues: MALPLAFLFTSPGPVLVEIGPITIRWYGLLIATAVLIGVSLSQYLAKRRQVNPDLLSDLSIWLVIGAIPAARIYYVLFQWSEYAQHPERIIAIWQGGIAIHGAIIGGTLAALIFAKLKRVPFWQLADLVAPSLILGQAIGRWGNFFNSEAFGRPTNLPWKLYIPIERRPPDLVSFEYFHPTFLYESIWDLMVFALLITLFFRSLAGKPRLKVGTLFMVYLATYSLGRLWIEGLRTDSLMLGPLRIAQVVSLTGIALGLAGLAWLYVRKRPLPDVVPSAKDTGE.

4 helical membrane-spanning segments follow: residues 19-39 (IGPI…LIGV), 59-79 (LSIW…VLFQ), 90-110 (IIAI…GTLA), and 120-140 (VPFW…QAIG). Residue arginine 141 coordinates a 1,2-diacyl-sn-glycero-3-phospho-(1'-sn-glycerol). The next 3 membrane-spanning stretches (helical) occupy residues 181–201 (TFLY…TLFF), 212–232 (VGTL…WIEG), and 245–265 (IAQV…AWLY).

The protein belongs to the Lgt family.

The protein localises to the cell inner membrane. It carries out the reaction L-cysteinyl-[prolipoprotein] + a 1,2-diacyl-sn-glycero-3-phospho-(1'-sn-glycerol) = an S-1,2-diacyl-sn-glyceryl-L-cysteinyl-[prolipoprotein] + sn-glycerol 1-phosphate + H(+). The protein operates within protein modification; lipoprotein biosynthesis (diacylglyceryl transfer). In terms of biological role, catalyzes the transfer of the diacylglyceryl group from phosphatidylglycerol to the sulfhydryl group of the N-terminal cysteine of a prolipoprotein, the first step in the formation of mature lipoproteins. The protein is Phosphatidylglycerol--prolipoprotein diacylglyceryl transferase of Nostoc sp. (strain PCC 7120 / SAG 25.82 / UTEX 2576).